The primary structure comprises 81 residues: Cytochrome c oxidase subunit NDUFA4 (81 aa).

The Mitochondrial matrix segment spans residues Met1–Ser14. Residue Lys10 is modified to N6-acetyllysine. The chain crosses the membrane as a helical span at residues Leu15–Ala37. Topologically, residues Leu38–Phe81 are mitochondrial intermembrane. Ser66 is subject to Phosphoserine.

Belongs to the complex IV NDUFA4 subunit family. As to quaternary structure, component of the cytochrome c oxidase (complex IV, CIV), a multisubunit enzyme composed of 14 subunits. The complex is composed of a catalytic core of 3 subunits MT-CO1, MT-CO2 and MT-CO3, encoded in the mitochondrial DNA, and 11 supernumerary subunits COX4I1 (or COX4I2), COX5A, COX5B, COX6A1 (or COX6A2), COX6B1 (or COX6B2), COX6C, COX7A2 (or COX7A1), COX7B, COX7C, COX8A and NDUFA4, which are encoded in the nuclear genome. The complex exists as a monomer or a dimer and forms supercomplexes (SCs) in the inner mitochondrial membrane with NADH-ubiquinone oxidoreductase (complex I, CI) and ubiquinol-cytochrome c oxidoreductase (cytochrome b-c1 complex, complex III, CIII), resulting in different assemblies (supercomplex SCI(1)III(2)IV(1) and megacomplex MCI(2)III(2)IV(2)). Interacts with RAB5IF. Interacts with FLVCR2; this interaction occurs in the absence of heme and is disrupted upon heme binding.

The protein resides in the mitochondrion inner membrane. Functionally, component of the cytochrome c oxidase, the last enzyme in the mitochondrial electron transport chain which drives oxidative phosphorylation. The respiratory chain contains 3 multisubunit complexes succinate dehydrogenase (complex II, CII), ubiquinol-cytochrome c oxidoreductase (cytochrome b-c1 complex, complex III, CIII) and cytochrome c oxidase (complex IV, CIV), that cooperate to transfer electrons derived from NADH and succinate to molecular oxygen, creating an electrochemical gradient over the inner membrane that drives transmembrane transport and the ATP synthase. Cytochrome c oxidase is the component of the respiratory chain that catalyzes the reduction of oxygen to water. Electrons originating from reduced cytochrome c in the intermembrane space (IMS) are transferred via the dinuclear copper A center (CU(A)) of subunit 2 and heme A of subunit 1 to the active site in subunit 1, a binuclear center (BNC) formed by heme A3 and copper B (CU(B)). The BNC reduces molecular oxygen to 2 water molecules unsing 4 electrons from cytochrome c in the IMS and 4 protons from the mitochondrial matrix. NDUFA4 is required for complex IV maintenance. The sequence is that of Cytochrome c oxidase subunit NDUFA4 (NDUFA4) from Homo sapiens (Human).